The following is a 597-amino-acid chain: Arginine--tRNA ligase (597 aa).

The short motif at 125–135 (PNTNKPLHLGH) is the 'HIGH' region element.

The protein belongs to the class-I aminoacyl-tRNA synthetase family. As to quaternary structure, monomer.

It is found in the cytoplasm. It catalyses the reaction tRNA(Arg) + L-arginine + ATP = L-arginyl-tRNA(Arg) + AMP + diphosphate. This is Arginine--tRNA ligase from Porphyromonas gingivalis (strain ATCC BAA-308 / W83).